The following is a 98-amino-acid chain: Gas vesicle protein A (98 aa).

The protein belongs to the gas vesicle GvpA family. As to quaternary structure, the gas vesicle shell is 2 nm thick and consists of a single layer of this protein. It forms helical ribs nearly perpendicular to the long axis of the vesicle.

It is found in the gas vesicle shell. Gas vesicles are hollow, gas filled proteinaceous nanostructures found in some microorganisms. During planktonic growth they allow positioning of the organism at a favorable depth for light or nutrient acquisition. GvpA forms the protein shell. This Koribacter versatilis (strain Ellin345) protein is Gas vesicle protein A.